Here is a 159-residue protein sequence, read N- to C-terminus: MFGFNDMVKFLWSFLIVLPLVQIIHVSGHSFMAFIFGGKGSLDIGMGKTLLKIGPIRFRTIYFIDSFCRYGELKIDNRFSNALVYAGGCLFNLITIFAINLLIIHSVLKPNVFFYQFVYFSTYYVFFALLPVRYSEKKSSDGLAIYKVLRYGERYEIDK.

Transmembrane regions (helical) follow at residues 16 to 36 (IVLPLVQIIHVSGHSFMAFIF), 84 to 104 (VYAGGCLFNLITIFAINLLII), and 112 to 132 (VFFYQFVYFSTYYVFFALLPV).

The protein resides in the cell membrane. This is an uncharacterized protein from Bacillus subtilis (strain 168).